Here is an 846-residue protein sequence, read N- to C-terminus: Translation initiation factor IF-2 (846 aa).

The tract at residues Gln-94–Val-263 is disordered. Basic and acidic residues predominate over residues Ser-96–Arg-135. Composition is skewed to low complexity over residues Arg-136 to Pro-148 and Ala-158 to Asp-176. 2 stretches are compositionally biased toward basic and acidic residues: residues Ala-177–Ala-206 and Thr-230–Arg-239. Basic residues predominate over residues Arg-240–Gln-253. The tr-type G domain occupies Ser-346 to Glu-513. Residues Gly-355 to Thr-362 are G1. Position 355–362 (Gly-355–Thr-362) interacts with GTP. The interval Gly-380 to His-384 is G2. The segment at Asp-401–Gly-404 is G3. GTP contacts are provided by residues Asp-401–His-405 and Asn-455–Asp-458. The segment at Asn-455–Asp-458 is G4. Residues Ser-491–Lys-493 form a G5 region.

This sequence belongs to the TRAFAC class translation factor GTPase superfamily. Classic translation factor GTPase family. IF-2 subfamily.

The protein resides in the cytoplasm. In terms of biological role, one of the essential components for the initiation of protein synthesis. Protects formylmethionyl-tRNA from spontaneous hydrolysis and promotes its binding to the 30S ribosomal subunits. Also involved in the hydrolysis of GTP during the formation of the 70S ribosomal complex. In Pseudomonas putida (strain ATCC 700007 / DSM 6899 / JCM 31910 / BCRC 17059 / LMG 24140 / F1), this protein is Translation initiation factor IF-2.